The following is a 245-amino-acid chain: tRNA1(Val) (adenine(37)-N6)-methyltransferase (245 aa).

Belongs to the methyltransferase superfamily. tRNA (adenine-N(6)-)-methyltransferase family.

It localises to the cytoplasm. It carries out the reaction adenosine(37) in tRNA1(Val) + S-adenosyl-L-methionine = N(6)-methyladenosine(37) in tRNA1(Val) + S-adenosyl-L-homocysteine + H(+). Its function is as follows. Specifically methylates the adenine in position 37 of tRNA(1)(Val) (anticodon cmo5UAC). This Escherichia coli O7:K1 (strain IAI39 / ExPEC) protein is tRNA1(Val) (adenine(37)-N6)-methyltransferase.